A 359-amino-acid chain; its full sequence is Type-1 angiotensin II receptor (359 aa).

The Extracellular portion of the chain corresponds to 1-25 (MVPNYSTEETVKRIHVDCPVSGRHS). The N-linked (GlcNAc...) asparagine glycan is linked to asparagine 4. Aspartate 17 is an angiotensin II binding site. Disulfide bonds link cysteine 18–cysteine 274 and cysteine 101–cysteine 180. Residues 26–55 (YIYIMVPTVYSIIFIIGIFGNSLVVIVIYC) form a helical membrane-spanning segment. The Cytoplasmic portion of the chain corresponds to 56-61 (YMKLKT). The chain crosses the membrane as a helical span at residues 62–89 (VASIFLLNLALADLCFLITLPLWAAYTA). Topologically, residues 90-98 (MEYQWPFGN) are extracellular. Residues 99–125 (CLCKLASAGISFNLYASVFLLTCLSID) form a helical membrane-spanning segment. Residues 126–141 (RYLAIVHPVKSRIRRT) are Cytoplasmic-facing. A helical transmembrane segment spans residues 142–165 (MFVARVTCIVIWLLAGVASLPVII). At 166–190 (HRNIFFAENLNMTVCGFRYDNNNTT) the chain is on the extracellular side. Arginine 167 is an angiotensin II binding site. Asparagine 176 carries an N-linked (GlcNAc...) asparagine glycan. The angiotensin II site is built by phenylalanine 182 and tyrosine 184. 2 N-linked (GlcNAc...) asparagine glycosylation sites follow: asparagine 187 and asparagine 188. The helical transmembrane segment at 191–216 (LRVGLGLSKNLLGFLIPFLIILTSYT) threads the bilayer. Angiotensin II is bound at residue lysine 199. The Cytoplasmic portion of the chain corresponds to 217 to 239 (LIWKTLKKAYQIQRNKTRNDDIF). The chain crosses the membrane as a helical span at residues 240–268 (KMIVAIVFFFFFSWIPHQVFTFLDVLIQL). Over 269–278 (HVITDCKITD) the chain is Extracellular. The chain crosses the membrane as a helical span at residues 279–304 (IVDTAMPFTICIAYFNNCLNPFFYVF). The Cytoplasmic segment spans residues 305-359 (FGKNFKKYFLQLIKYIPPNVSTHPSLTTKMSSLSYRPPENIRLPTKKTAGSFDTE).

The protein belongs to the G-protein coupled receptor 1 family. In terms of processing, C-terminal Ser or Thr residues may be phosphorylated. In terms of tissue distribution, adrenal medulla.

The protein resides in the cell membrane. In terms of biological role, receptor for angiotensin II, a vasoconstricting peptide, which acts as a key regulator of blood pressure and sodium retention by the kidney. The activated receptor in turn couples to G-alpha proteins G(q) (GNAQ, GNA11, GNA14 or GNA15) and thus activates phospholipase C and increases the cytosolic Ca(2+) concentrations, which in turn triggers cellular responses such as stimulation of protein kinase C. This is Type-1 angiotensin II receptor (AGTR1) from Meleagris gallopavo (Wild turkey).